We begin with the raw amino-acid sequence, 100 residues long: Urease subunit gamma (100 aa).

Belongs to the urease gamma subunit family. In terms of assembly, heterotrimer of UreA (gamma), UreB (beta) and UreC (alpha) subunits. Three heterotrimers associate to form the active enzyme.

It localises to the cytoplasm. It catalyses the reaction urea + 2 H2O + H(+) = hydrogencarbonate + 2 NH4(+). It functions in the pathway nitrogen metabolism; urea degradation; CO(2) and NH(3) from urea (urease route): step 1/1. In Prochlorococcus marinus (strain AS9601), this protein is Urease subunit gamma.